Reading from the N-terminus, the 481-residue chain is Aspartyl/glutamyl-tRNA(Asn/Gln) amidotransferase subunit B (481 aa).

This sequence belongs to the GatB/GatE family. GatB subfamily. Heterotrimer of A, B and C subunits.

It carries out the reaction L-glutamyl-tRNA(Gln) + L-glutamine + ATP + H2O = L-glutaminyl-tRNA(Gln) + L-glutamate + ADP + phosphate + H(+). The catalysed reaction is L-aspartyl-tRNA(Asn) + L-glutamine + ATP + H2O = L-asparaginyl-tRNA(Asn) + L-glutamate + ADP + phosphate + 2 H(+). Functionally, allows the formation of correctly charged Asn-tRNA(Asn) or Gln-tRNA(Gln) through the transamidation of misacylated Asp-tRNA(Asn) or Glu-tRNA(Gln) in organisms which lack either or both of asparaginyl-tRNA or glutaminyl-tRNA synthetases. The reaction takes place in the presence of glutamine and ATP through an activated phospho-Asp-tRNA(Asn) or phospho-Glu-tRNA(Gln). The polypeptide is Aspartyl/glutamyl-tRNA(Asn/Gln) amidotransferase subunit B (Pseudomonas putida (strain ATCC 47054 / DSM 6125 / CFBP 8728 / NCIMB 11950 / KT2440)).